The sequence spans 415 residues: MKSYLVGGAVRDALLGLPVKDKDWVVVGATPAEMLALGYQQVGKDFPVFLHPQTHEEYALARTERKSGQGYTGFTCYAAPDVTLEQDLQRRDLTINAIAQDDSGEFIDPYHGRDDLKARLLRHVSPAFNEDPLRVLRVARFAARYAHLGFRIAPETLSLMREMAENGELEHLTAERVWKETESALTTRNPQIYFLMLHECGALKVLFPEVDKLFGVPAPAKWHPEIDTGIHTLMTLAMAAMLSPAVDVRFAALCHDLGKGLTPPHLWPRHHGHGPAGVRLVAQVCERLRVPNDIRDLAKLVAEFHDLIHTFPILKPRTIVGLFDSIDAWRKPQRVEQIAITSEADVRGRTGFEAKDYPQARLLREAWEVARAVSPKEVVEAGFTGPAIREELTKRRIRAVAAWKEERCPQPAAEG.

Residues glycine 8 and arginine 11 each contribute to the ATP site. 2 residues coordinate CTP: glycine 8 and arginine 11. The Mg(2+) site is built by aspartate 21 and aspartate 23. The ATP site is built by arginine 91, arginine 137, and arginine 140. The CTP site is built by arginine 91, arginine 137, and arginine 140. The HD domain occupies 228 to 329 (TGIHTLMTLA…VGLFDSIDAW (102 aa)).

It belongs to the tRNA nucleotidyltransferase/poly(A) polymerase family. Bacterial CCA-adding enzyme type 1 subfamily. As to quaternary structure, monomer. Can also form homodimers and oligomers. It depends on Mg(2+) as a cofactor. Requires Ni(2+) as cofactor.

The catalysed reaction is a tRNA precursor + 2 CTP + ATP = a tRNA with a 3' CCA end + 3 diphosphate. It catalyses the reaction a tRNA with a 3' CCA end + 2 CTP + ATP = a tRNA with a 3' CCACCA end + 3 diphosphate. Functionally, catalyzes the addition and repair of the essential 3'-terminal CCA sequence in tRNAs without using a nucleic acid template. Adds these three nucleotides in the order of C, C, and A to the tRNA nucleotide-73, using CTP and ATP as substrates and producing inorganic pyrophosphate. tRNA 3'-terminal CCA addition is required both for tRNA processing and repair. Also involved in tRNA surveillance by mediating tandem CCA addition to generate a CCACCA at the 3' terminus of unstable tRNAs. While stable tRNAs receive only 3'-terminal CCA, unstable tRNAs are marked with CCACCA and rapidly degraded. This Cronobacter sakazakii (strain ATCC BAA-894) (Enterobacter sakazakii) protein is Multifunctional CCA protein.